A 275-amino-acid chain; its full sequence is Elongation factor Ts (275 aa).

The involved in Mg(2+) ion dislocation from EF-Tu stretch occupies residues 76 to 79; that stretch reads TDFV.

The protein belongs to the EF-Ts family.

It localises to the cytoplasm. Associates with the EF-Tu.GDP complex and induces the exchange of GDP to GTP. It remains bound to the aminoacyl-tRNA.EF-Tu.GTP complex up to the GTP hydrolysis stage on the ribosome. This Rhodococcus erythropolis (strain PR4 / NBRC 100887) protein is Elongation factor Ts.